The sequence spans 120 residues: Secreted RxLR effector protein 29 (120 aa).

A signal peptide spans 1–21 (MRRTAFIVLSLVALIAPCVTS). Positions 47–64 (RHLRSEANGRLAVVDEEK) match the RxLR-dEER motif.

The protein belongs to the RxLR effector family.

The protein localises to the secreted. Its subcellular location is the host cytoplasm. It localises to the host nucleus. Functionally, effector that acts as a broad suppressor of cell death to interrupt plant immunity. Inhibits cell death induced by cell death-inducing proteins, including the PAMP elicitor INF1 from P.infestans. This Plasmopara viticola (Downy mildew of grapevine) protein is Secreted RxLR effector protein 29.